A 91-amino-acid polypeptide reads, in one-letter code: Sm-like protein LSM36B (91 aa).

The region spanning 14–86 (TPADFLKSIR…VLYISTTKGT (73 aa)) is the Sm domain.

The protein belongs to the snRNP Sm proteins family. Component of the heptameric LSM1-LSM7 complex that forms a seven-membered ring structure with a donut shape. The LSM subunits are arranged in the order LSM1, LSM2, LSM3, LSM6, LSM5, LSM7 and LSM4. Component of the heptameric LSM2-LSM8 complex that forms a seven-membered ring structure with a donut shape. The LSM subunits are arranged in the order LSM8, LSM2, LSM3, LSM6, LSM5, LSM7 and LSM4. LSM6B subunit interacts only with its two neighboring subunits, LSM3A or LSM3B and LSM5. As to expression, expressed in roots, leaves, stems, flowers and siliques.

Its subcellular location is the cytoplasm. It is found in the nucleus. Functionally, component of LSM protein complexes, which are involved in RNA processing. Component of the cytoplasmic LSM1-LSM7 complex which is involved in mRNA degradation by promoting decapping and leading to accurate 5'-3' mRNA decay. The cytoplasmic LSM1-LSM7 complex regulates developmental gene expression by the decapping of specific development-related transcripts. Component of the nuclear LSM2-LSM8 complex which is involved splicing nuclear mRNAs. LSM2-LSM8 binds directly to the U6 small nuclear RNAs (snRNAs) and is essential for accurate splicing of selected development-related mRNAs through the stabilization of the spliceosomal U6 snRNA. Plays a critical role in the regulation of development-related gene expression. The protein is Sm-like protein LSM36B of Arabidopsis thaliana (Mouse-ear cress).